The following is a 375-amino-acid chain: Succinyl-diaminopimelate desuccinylase (375 aa).

Histidine 66 is a Zn(2+) binding site. The active site involves aspartate 68. Aspartate 99 is a binding site for Zn(2+). Glutamate 133 (proton acceptor) is an active-site residue. The Zn(2+) site is built by glutamate 134, glutamate 162, and histidine 348.

Belongs to the peptidase M20A family. DapE subfamily. In terms of assembly, homodimer. Zn(2+) is required as a cofactor. It depends on Co(2+) as a cofactor.

The enzyme catalyses N-succinyl-(2S,6S)-2,6-diaminopimelate + H2O = (2S,6S)-2,6-diaminopimelate + succinate. It functions in the pathway amino-acid biosynthesis; L-lysine biosynthesis via DAP pathway; LL-2,6-diaminopimelate from (S)-tetrahydrodipicolinate (succinylase route): step 3/3. In terms of biological role, catalyzes the hydrolysis of N-succinyl-L,L-diaminopimelic acid (SDAP), forming succinate and LL-2,6-diaminopimelate (DAP), an intermediate involved in the bacterial biosynthesis of lysine and meso-diaminopimelic acid, an essential component of bacterial cell walls. The chain is Succinyl-diaminopimelate desuccinylase from Buchnera aphidicola subsp. Acyrthosiphon pisum (strain APS) (Acyrthosiphon pisum symbiotic bacterium).